Here is a 692-residue protein sequence, read N- to C-terminus: Junctophilin-2 (692 aa).

Residues 1–670 are Cytoplasmic-facing; it reads MSGGRFDFDD…EVEVEEVPNT (670 aa). MORN repeat units follow at residues 14–36, 38–59, 60–79, 82–104, 106–128, and 129–151; these read YCGGWEGGKAHGHGLCTGPKGQG, YSGSWNFGFEVAGVYTWPSGNT, FEGYWSQGKRHGLGIETKGR, YKGEWTHGFKGRYGIRQSTNSGA, YEGTWNNGLQDGYGTETYADGGT, and YQGQFTNGMRHGYGVRQSVPYGM. Phosphoserine occurs at positions 162 and 165. Disordered regions lie at residues 164 to 190 and 246 to 273; these read SSLRSEHSNGTVAPDSPAADGPTLPLP and LSSGASDAASTGSLAEGAEGPDDAAAPF. MORN repeat units lie at residues 285–307 and 308–330; these read YMGEWKNDKRSGFGVSERSSGLR and YEGEWLDNLRHGYGRTTLPDGHR. The short motif at 345-359 is the Bipartite nuclear localization signal element; that stretch reads KRRVLPLKSNKVRQK. Positions 439 to 661 are disordered; the sequence is NSESLLEPRE…KEVAQEAEAE (223 aa). A phosphoserine mark is found at Ser440, Ser442, and Ser462. Basic and acidic residues predominate over residues 457-471; the sequence is ERPRESPQLHERETP. A Phosphothreonine modification is found at Thr470. Pro residues predominate over residues 474-487; sequence EGGPPSPAGTPPQP. Phosphoserine is present on Ser479. Thr483 is subject to Phosphothreonine. The Nuclear localization signal motif lies at 488-492; the sequence is KRPRP. Phosphoserine occurs at positions 527 and 533. Over residues 573 to 582 the composition is skewed to acidic residues; it reads PLEDEPEPEP. Phosphoserine is present on residues Ser589, Ser593, Ser604, and Ser609. Residues 627-640 are compositionally biased toward basic and acidic residues; that stretch reads AEPKAKARKTEARG. Residues 671 to 691 traverse the membrane as a helical; Anchor for type IV membrane protein segment; it reads VLICMVILLNIGLAILFVHLL.

The protein belongs to the junctophilin family. As to quaternary structure, interacts with TRPC3. Interacts with BAG5 and HSPA8; the interaction with HSPA8 is increased in the presence of BAG5. Junctophilin-2 N-terminal fragment: Interacts with MEF2C. Post-translationally, proteolytically cleaved by calpain in response to cardiac stress. The major cleavage site takes place at the C-terminus and leads to the release of the Junctophilin-2 N-terminal fragment chain (JP2NT). Phosphorylation on Ser-165, probably by PKC, affects RYR1-mediated calcium ion release, interaction with TRPC3, and skeletal muscle myotubule development.

Its subcellular location is the cell membrane. The protein localises to the sarcoplasmic reticulum membrane. It is found in the endoplasmic reticulum membrane. The protein resides in the nucleus. In terms of biological role, membrane-binding protein that provides a structural bridge between the plasma membrane and the sarcoplasmic reticulum and is required for normal excitation-contraction coupling in cardiomyocytes. Provides a structural foundation for functional cross-talk between the cell surface and intracellular Ca(2+) release channels by maintaining the 12-15 nm gap between the sarcolemma and the sarcoplasmic reticulum membranes in the cardiac dyads. Necessary for proper intracellular Ca(2+) signaling in cardiac myocytes via its involvement in ryanodine receptor-mediated calcium ion release. Contributes to the construction of skeletal muscle triad junctions. Functionally, transcription repressor required to safeguard against the deleterious effects of cardiac stress. Generated following cleavage of the Junctophilin-2 chain by calpain in response to cardiac stress in cardiomyocytes. Following cleavage and release from the membrane, translocates to the nucleus, binds DNA and represses expression of genes implicated in cell growth and differentiation, hypertrophy, inflammation and fibrosis. Modifies the transcription profile and thereby attenuates pathological remodeling in response to cardiac stress. Probably acts by competing with MEF2 transcription factors and TATA-binding proteins. This chain is Junctophilin-2, found in Rattus norvegicus (Rat).